The following is a 182-amino-acid chain: NADH-quinone oxidoreductase subunit B (182 aa).

[4Fe-4S] cluster-binding residues include Cys-47, Cys-48, Cys-113, and Cys-142.

Belongs to the complex I 20 kDa subunit family. As to quaternary structure, NDH-1 is composed of 14 different subunits. Subunits NuoB, C, D, E, F, and G constitute the peripheral sector of the complex. It depends on [4Fe-4S] cluster as a cofactor.

It localises to the cell inner membrane. The catalysed reaction is a quinone + NADH + 5 H(+)(in) = a quinol + NAD(+) + 4 H(+)(out). In terms of biological role, NDH-1 shuttles electrons from NADH, via FMN and iron-sulfur (Fe-S) centers, to quinones in the respiratory chain. The immediate electron acceptor for the enzyme in this species is believed to be ubiquinone. Couples the redox reaction to proton translocation (for every two electrons transferred, four hydrogen ions are translocated across the cytoplasmic membrane), and thus conserves the redox energy in a proton gradient. In Anaeromyxobacter dehalogenans (strain 2CP-1 / ATCC BAA-258), this protein is NADH-quinone oxidoreductase subunit B.